The primary structure comprises 1031 residues: Error-prone DNA polymerase (1031 aa).

Belongs to the DNA polymerase type-C family. DnaE2 subfamily.

It localises to the cytoplasm. It catalyses the reaction DNA(n) + a 2'-deoxyribonucleoside 5'-triphosphate = DNA(n+1) + diphosphate. In terms of biological role, DNA polymerase involved in damage-induced mutagenesis and translesion synthesis (TLS). It is not the major replicative DNA polymerase. The polypeptide is Error-prone DNA polymerase (Pseudomonas savastanoi pv. phaseolicola (strain 1448A / Race 6) (Pseudomonas syringae pv. phaseolicola (strain 1448A / Race 6))).